Consider the following 718-residue polypeptide: Ribonuclease J (718 aa).

The interval 1 to 130 (MNDSRNRGRK…RGNRGGGRRN (130 aa)) is disordered. Composition is skewed to low complexity over residues 55–91 (AAQGAQGSQDSQGSQNAQGSQNRESGNNNRNRSNNNR) and 100–118 (SGNANEGANNNSGNQNRQG). Residues His-220, His-222, Asp-224, His-225, His-287, and Asp-309 each contribute to the Zn(2+) site. 510-514 (HTSGH) contributes to the substrate binding site. Residue His-536 coordinates Zn(2+).

The protein belongs to the metallo-beta-lactamase superfamily. RNA-metabolizing metallo-beta-lactamase-like family. Bacterial RNase J subfamily. Homodimer, may be a subunit of the RNA degradosome. Zn(2+) serves as cofactor.

Its subcellular location is the cytoplasm. In terms of biological role, an RNase that has 5'-3' exonuclease and possibly endoonuclease activity. Involved in maturation of rRNA and in some organisms also mRNA maturation and/or decay. This chain is Ribonuclease J, found in Corynebacterium glutamicum (strain ATCC 13032 / DSM 20300 / JCM 1318 / BCRC 11384 / CCUG 27702 / LMG 3730 / NBRC 12168 / NCIMB 10025 / NRRL B-2784 / 534).